Reading from the N-terminus, the 315-residue chain is Serine/threonine-protein phosphatase PP2A catalytic subunit 3 (315 aa).

Mn(2+) is bound by residues Asp62, His64, Asp90, and Asn122. The active-site Proton donor is the His123. Mn(2+) contacts are provided by His172 and His247. The tract at residues 294–315 is disordered; it reads QFEPAPRENEPHTTRRVPDYFL. Residues 298-315 are compositionally biased toward basic and acidic residues; sequence APRENEPHTTRRVPDYFL. Leu315 bears the Leucine methyl ester mark.

Belongs to the PPP phosphatase family. PP-2A subfamily. Requires Mn(2+) as cofactor. In terms of processing, reversibly methyl esterified on Leu-315 by leucine carboxyl methyltransferase 1 (PPM1) and protein phosphatase methylesterase 1 (PPE1). Carboxyl methylation influences the affinity of the catalytic subunit for the different regulatory subunits, thereby modulating the PP2A holoenzyme's substrate specificity, enzyme activity and cellular localization.

It carries out the reaction O-phospho-L-seryl-[protein] + H2O = L-seryl-[protein] + phosphate. The enzyme catalyses O-phospho-L-threonyl-[protein] + H2O = L-threonyl-[protein] + phosphate. The chain is Serine/threonine-protein phosphatase PP2A catalytic subunit 3 (Ppn3) from Paramecium tetraurelia.